The chain runs to 263 residues: tRNA (guanine-N(7)-)-methyltransferase (263 aa).

Over residues 1-10 the composition is skewed to polar residues; the sequence is MLPQDPSTEP. Residues 1–38 form a disordered region; sequence MLPQDPSTEPTPADDAAPVDSAGQASAPSPADPEGVAH. Positions 91, 116, 143, and 166 each coordinate S-adenosyl-L-methionine. Asp166 is a catalytic residue. Lys170 is a substrate binding site. The tract at residues 172-177 is interaction with RNA; that stretch reads RHNKRR. Substrate-binding positions include Asp202 and 240–243; that span reads TKFE.

It belongs to the class I-like SAM-binding methyltransferase superfamily. TrmB family.

The enzyme catalyses guanosine(46) in tRNA + S-adenosyl-L-methionine = N(7)-methylguanosine(46) in tRNA + S-adenosyl-L-homocysteine. It participates in tRNA modification; N(7)-methylguanine-tRNA biosynthesis. In terms of biological role, catalyzes the formation of N(7)-methylguanine at position 46 (m7G46) in tRNA. This Cupriavidus necator (strain ATCC 17699 / DSM 428 / KCTC 22496 / NCIMB 10442 / H16 / Stanier 337) (Ralstonia eutropha) protein is tRNA (guanine-N(7)-)-methyltransferase.